A 304-amino-acid polypeptide reads, in one-letter code: UDP-3-O-acyl-N-acetylglucosamine deacetylase (304 aa).

His-79, His-238, and Asp-242 together coordinate Zn(2+). The active-site Proton donor is the His-265.

Belongs to the LpxC family. It depends on Zn(2+) as a cofactor.

The catalysed reaction is a UDP-3-O-[(3R)-3-hydroxyacyl]-N-acetyl-alpha-D-glucosamine + H2O = a UDP-3-O-[(3R)-3-hydroxyacyl]-alpha-D-glucosamine + acetate. It functions in the pathway glycolipid biosynthesis; lipid IV(A) biosynthesis; lipid IV(A) from (3R)-3-hydroxytetradecanoyl-[acyl-carrier-protein] and UDP-N-acetyl-alpha-D-glucosamine: step 2/6. Functionally, catalyzes the hydrolysis of UDP-3-O-myristoyl-N-acetylglucosamine to form UDP-3-O-myristoylglucosamine and acetate, the committed step in lipid A biosynthesis. This is UDP-3-O-acyl-N-acetylglucosamine deacetylase from Chromobacterium violaceum (strain ATCC 12472 / DSM 30191 / JCM 1249 / CCUG 213 / NBRC 12614 / NCIMB 9131 / NCTC 9757 / MK).